A 152-amino-acid polypeptide reads, in one-letter code: Protein D1 (152 aa).

Belongs to the phosphatidylethanolamine-binding protein family.

This Onchocerca volvulus protein is Protein D1 (D1).